Consider the following 291-residue polypeptide: Halorhodopsin (291 aa).

Over 1-30 (MTETLPPVTESAVALQAEVTQRELFEFVLN) the chain is Extracellular. Residues 31-56 (DPLLASSLYINIALAGLSILLFVFMT) form a helical membrane-spanning segment. The Cytoplasmic segment spans residues 57-62 (RGLDDP). The helical transmembrane segment at 63–86 (RAKLIAVSTILVPVVSIASYTGLA) threads the bilayer. Residues 87–120 (SGLTISVLEMPAGHFAEGSSVMLGGEEVDGVVTM) lie on the Extracellular side of the membrane. The helical transmembrane segment at 121–142 (WGRYLTWALSTPMILLALGLLA) threads the bilayer. Residues 143–145 (GSN) are Cytoplasmic-facing. The chain crosses the membrane as a helical span at residues 146-169 (ATKLFTAITFDIAMCVTGLAAALT). The Extracellular portion of the chain corresponds to 170–172 (TSS). Residues 173 to 195 (HLMRWFWYAISCACFLVVLYILL) form a helical membrane-spanning segment. Over 196–207 (VEWAQDAKAAGT) the chain is Cytoplasmic. Residues 208 to 231 (ADMFNTLKLLTVVMWLGYPIVWAL) form a helical membrane-spanning segment. Topologically, residues 232–240 (GVEGIAVLP) are extracellular. Residues 241-269 (VGVTSWGYSFLDIVAKYIFAFLLLNYLTS) form a helical membrane-spanning segment. K256 bears the N6-(retinylidene)lysine mark. Residues 270 to 291 (NESVVSGSILDVPSASGTPADD) lie on the Cytoplasmic side of the membrane.

It belongs to the archaeal/bacterial/fungal opsin family.

The protein localises to the cell membrane. In terms of biological role, light-driven anion pump. Binding affinity for the anions is in the order, bromide &gt; chloride &gt; nitrate &gt; azide &gt; bromate and binding is pH dependent. In Natronomonas pharaonis (Natronobacterium pharaonis), this protein is Halorhodopsin (hop).